The primary structure comprises 580 residues: MRVLFILFLFYFYTYTEAQQYYPIDPTGKCEQYIGDSVITPCNSIYVSSTANQSTAMLSLNLYFSLLGGSSASCQNAYTFATLCSTYLPECEIFIDNSTNKEIAMPKRVCLDTCNSVSKNCQITSYFDCNQLEPISKLPLFPKESSDYNLTTYGGELNYRLDCYDPPKSNETTVIGYCPFPLVFRNRTIVGKGSDSLDNSENYGYTYVSEDSYCTIPCPAPIFSEKQWDNIFDTSDAISLVSLLCSVYLFITYMVINPKRNKYDYFFSFFVLSIILMSIAGTIGFSVGGTRKLLCPEINRRGVYTDPAVAAAGWIFQFAIINAILWFSINSFELWFQIKFIKRKLHLIKFYILAVLVISIALSVPLSAIGEFNAGLGNFVVWIESGKYQNWFFWGPLGIVLTVGTTFIGLVIWEIYKIVSSTNKSDFFKLQLKPLMNMLLIYLTFVYLFGYNFYIHNSLNGFYGSSEEFKNCIISTDGKDCRIQGPPYSSILMFVFCLRIYGVYCIALYGFSPKTRSIWSNSIVFNNSMANKLKTLYISSGTTKGGTSSTDIKMSTNNNSNMDSGGGKSSSMEPDEIILR.

Positions 1–18 (MRVLFILFLFYFYTYTEA) are cleaved as a signal peptide. Residues 19 to 236 (QQYYPIDPTG…QWDNIFDTSD (218 aa)) lie on the Extracellular side of the membrane. Residues 25 to 154 (DPTGKCEQYI…SSDYNLTTYG (130 aa)) form the FZ domain. N-linked (GlcNAc...) asparagine glycosylation is found at asparagine 52, asparagine 97, asparagine 149, asparagine 170, and asparagine 186. The helical transmembrane segment at 237–257 (AISLVSLLCSVYLFITYMVIN) threads the bilayer. Residues 258-264 (PKRNKYD) lie on the Cytoplasmic side of the membrane. The helical transmembrane segment at 265 to 285 (YFFSFFVLSIILMSIAGTIGF) threads the bilayer. At 286 to 308 (SVGGTRKLLCPEINRRGVYTDPA) the chain is on the extracellular side. A helical transmembrane segment spans residues 309–329 (VAAAGWIFQFAIINAILWFSI). Residues 330–349 (NSFELWFQIKFIKRKLHLIK) are Cytoplasmic-facing. Residues 350-370 (FYILAVLVISIALSVPLSAIG) traverse the membrane as a helical segment. Residues 371–391 (EFNAGLGNFVVWIESGKYQNW) lie on the Extracellular side of the membrane. Residues 392–412 (FFWGPLGIVLTVGTTFIGLVI) traverse the membrane as a helical segment. Residues 413 to 434 (WEIYKIVSSTNKSDFFKLQLKP) lie on the Cytoplasmic side of the membrane. The chain crosses the membrane as a helical span at residues 435–455 (LMNMLLIYLTFVYLFGYNFYI). The Extracellular portion of the chain corresponds to 456–490 (HNSLNGFYGSSEEFKNCIISTDGKDCRIQGPPYSS). The chain crosses the membrane as a helical span at residues 491-511 (ILMFVFCLRIYGVYCIALYGF). Residues 512-580 (SPKTRSIWSN…SMEPDEIILR (69 aa)) are Cytoplasmic-facing. Residues 514–519 (KTRSIW) carry the Lys-Thr-X-X-X-Trp motif, mediates interaction with the PDZ domain of Dvl family members motif. A disordered region spans residues 542–580 (TTKGGTSSTDIKMSTNNNSNMDSGGGKSSSMEPDEIILR). Residues 551 to 563 (DIKMSTNNNSNMD) show a composition bias toward polar residues.

This sequence belongs to the G-protein coupled receptor Fz/Smo family.

The protein localises to the membrane. The sequence is that of Frizzled and smoothened-like protein K (fslK) from Dictyostelium discoideum (Social amoeba).